The sequence spans 272 residues: Glutamate racemase (272 aa).

Substrate contacts are provided by residues 13 to 14 (DS) and 45 to 46 (YG). The Proton donor/acceptor role is filled by Cys-76. 77 to 78 (NT) lines the substrate pocket. Catalysis depends on Cys-186, which acts as the Proton donor/acceptor. 187–188 (TH) contributes to the substrate binding site.

The protein belongs to the aspartate/glutamate racemases family.

It carries out the reaction L-glutamate = D-glutamate. It participates in cell wall biogenesis; peptidoglycan biosynthesis. In terms of biological role, provides the (R)-glutamate required for cell wall biosynthesis. The chain is Glutamate racemase from Cupriavidus pinatubonensis (strain JMP 134 / LMG 1197) (Cupriavidus necator (strain JMP 134)).